The sequence spans 256 residues: uncharacterized protein (256 aa).

The NADP(+) site is built by Ile-18, Ser-37, Lys-46, Asp-66, Tyr-164, Lys-168, Val-197, and Thr-199. Tyr-164 acts as the Proton donor in catalysis. Lys-168 serves as the catalytic Lowers pKa of active site Tyr.

Belongs to the short-chain dehydrogenases/reductases (SDR) family.

The protein resides in the cytoplasm. This is an uncharacterized protein from Saccharomyces cerevisiae (strain ATCC 204508 / S288c) (Baker's yeast).